A 223-amino-acid chain; its full sequence is DNA mismatch repair protein MutH (223 aa).

Belongs to the MutH family.

It localises to the cytoplasm. Its function is as follows. Sequence-specific endonuclease that cleaves unmethylated GATC sequences. It is involved in DNA mismatch repair. The polypeptide is DNA mismatch repair protein MutH (Shewanella baltica (strain OS185)).